Here is a 299-residue protein sequence, read N- to C-terminus: Circadian clock oscillator protein KaiA (299 aa).

The 169-residue stretch at 1 to 169 folds into the KaiA N-terminal domain; the sequence is MVSKLSLYLV…RLAEKLRERL (169 aa). The segment at 3-135 is psR domain, binds oxidized quinones; the sequence is SKLSLYLVTP…LHLAPSCALS (133 aa). The flexible linker stretch occupies residues 170–178; it reads GYLGVYYKR. A KaiA C-terminal domain is found at 179 to 287; it reads NPKYFYRSLS…CEMYRRSIPR (109 aa).

In terms of assembly, homodimer. The KaiABC complex composition changes during the circadian cycle to control KaiC phosphorylation. Complexes KaiC(6), KaiA(2-4):KaiC(6), KaiB(6):KaiC(6) and KaiC(6):KaiB(6):KaiA(12) are among the most important forms, many form cooperatively. KaiA and CikA bind to the same region of the KaiB(fs) form and therefore compete.

Key component of the KaiABC oscillator complex, which constitutes the main circadian regulator in cyanobacteria. Complex composition changes during the circadian cycle to control KaiC phosphorylation. KaiA stimulates KaiC autophosphorylation, while KaiB sequesters KaiA, leading to KaiC autodephosphorylation. KaiA binding to the KaiC CII domain during the subjective day yields KaiA(2-4):KaiC(6) complexes which stimulate KaiC autophosphorylation. Phospho-Ser-431 KaiC accumulation triggers binding of KaiB during the subjective night to form the KaiB(6):KaiC(6) complex, leading to changes in the output regulators CikA and SasA. KaiB(6):KaiC(6) formation exposes a site for KaiA binding on KaiB that sequesters KaiA from KaiC's CII domain, making the KaiC(6):KaiB(6):KaiA(12) complex resulting in KaiC autodephosphorylation. Complete dephosphorylation of KaiC leads to dissociation of KaiA(2):KaiB(1), completing 1 cycle of the Kai oscillator. Its function is as follows. Binds oxidized quinones via the N-terminal PsR domain, allowing it to sense redox changes and possibly mediate clock input. The protein is Circadian clock oscillator protein KaiA of Picosynechococcus sp. (strain ATCC 27264 / PCC 7002 / PR-6) (Agmenellum quadruplicatum).